Consider the following 303-residue polypeptide: tRNA-cytidine(32) 2-sulfurtransferase (303 aa).

The PP-loop motif motif lies at Ser49–Ser54. Positions 124, 127, and 215 each coordinate [4Fe-4S] cluster.

The protein belongs to the TtcA family. As to quaternary structure, homodimer. Requires Mg(2+) as cofactor. [4Fe-4S] cluster is required as a cofactor.

It is found in the cytoplasm. It carries out the reaction cytidine(32) in tRNA + S-sulfanyl-L-cysteinyl-[cysteine desulfurase] + AH2 + ATP = 2-thiocytidine(32) in tRNA + L-cysteinyl-[cysteine desulfurase] + A + AMP + diphosphate + H(+). It functions in the pathway tRNA modification. Catalyzes the ATP-dependent 2-thiolation of cytidine in position 32 of tRNA, to form 2-thiocytidine (s(2)C32). The sulfur atoms are provided by the cysteine/cysteine desulfurase (IscS) system. The polypeptide is tRNA-cytidine(32) 2-sulfurtransferase (Anaeromyxobacter sp. (strain Fw109-5)).